The primary structure comprises 142 residues: MLEKTLSILKPDVIKRNITGQVNSYIENSGLKIIIQKMCLLTRCQAEEFYAIHKSQHFFVPLIDFMVSGPIIVQVLQGENAISLYREIMGATDPKKASPGTIRADFAENIDANCVHGSDSLDNAMREIRFFFSDYELLALNG.

6 residues coordinate ATP: lysine 10, phenylalanine 58, arginine 86, threonine 92, arginine 103, and asparagine 113. The active-site Pros-phosphohistidine intermediate is the histidine 116.

It belongs to the NDK family. As to quaternary structure, homotetramer. It depends on Mg(2+) as a cofactor.

The protein resides in the cytoplasm. The enzyme catalyses a 2'-deoxyribonucleoside 5'-diphosphate + ATP = a 2'-deoxyribonucleoside 5'-triphosphate + ADP. The catalysed reaction is a ribonucleoside 5'-diphosphate + ATP = a ribonucleoside 5'-triphosphate + ADP. In terms of biological role, major role in the synthesis of nucleoside triphosphates other than ATP. The ATP gamma phosphate is transferred to the NDP beta phosphate via a ping-pong mechanism, using a phosphorylated active-site intermediate. This chain is Nucleoside diphosphate kinase, found in Ehrlichia chaffeensis (strain ATCC CRL-10679 / Arkansas).